The sequence spans 636 residues: Methionine--tRNA ligase (636 aa).

The 'HIGH' region motif lies at 12-22; sequence YYVNGDPHVGS. Residues cysteine 127, cysteine 130, cysteine 145, and cysteine 148 each contribute to the Zn(2+) site. A 'KMSKS' region motif is present at residues 298-302; it reads KMSKS. Residue lysine 301 participates in ATP binding. A tRNA-binding domain is found at 535 to 636; that stretch reads EFNKIEIKVV…KTVEAGAIVS (102 aa).

It belongs to the class-I aminoacyl-tRNA synthetase family. MetG type 2A subfamily. Homodimer. The cofactor is Zn(2+).

It localises to the cytoplasm. It catalyses the reaction tRNA(Met) + L-methionine + ATP = L-methionyl-tRNA(Met) + AMP + diphosphate. Is required not only for elongation of protein synthesis but also for the initiation of all mRNA translation through initiator tRNA(fMet) aminoacylation. This Fusobacterium nucleatum subsp. nucleatum (strain ATCC 25586 / DSM 15643 / BCRC 10681 / CIP 101130 / JCM 8532 / KCTC 2640 / LMG 13131 / VPI 4355) protein is Methionine--tRNA ligase (metG).